A 457-amino-acid polypeptide reads, in one-letter code: MYNCAIILAAGKGKRMKSSMPKVVHKVCGKEMVNHVIDNVRKANIKDVNLVIGKGSKTVKEHTKDRNLTYSMQEEQLGTGHAVICAEEFLKDKKGTVAIFTGDAPLITNETIQQLFEFHNSGKYAATLISSTVQDPTGYGRIIREASGEVKKIVEHKDCNEEELKVNEINSGMYCFDIEVLLNSLKNLNNDNSQGEYYLTDVIEITKKSGDKVGAIVVPYEEIMGVNSRVQLSEAEIVMRKRINHKHMVNGVTFIDCESTYIDVDVEIGNDTIIYPGCVIQGNTTIKEECTLYSNSRICNSVIGSGVIVENSVILESHVGEGTTVGPFAYIRPETKIGKSARIGDFVEIKKSTIGDNTKVSHLTYIGDAEVGSKCNFGCGTVVVNYDGQKKQKTIIGNNAFIGCNTNLISPVKVNNNTYIAAGSTITKEVPEGSLAIARSKQINKEGWLDKKGLLKK.

The pyrophosphorylase stretch occupies residues 1–229 (MYNCAIILAA…YEEIMGVNSR (229 aa)). UDP-N-acetyl-alpha-D-glucosamine is bound by residues 8–11 (LAAG), K22, Q73, and 78–79 (GT). D103 is a Mg(2+) binding site. UDP-N-acetyl-alpha-D-glucosamine contacts are provided by G140, E155, N170, and N227. N227 contributes to the Mg(2+) binding site. Residues 230-250 (VQLSEAEIVMRKRINHKHMVN) are linker. Positions 251–457 (GVTFIDCEST…WLDKKGLLKK (207 aa)) are N-acetyltransferase. 2 residues coordinate UDP-N-acetyl-alpha-D-glucosamine: R332 and K350. The active-site Proton acceptor is the H362. UDP-N-acetyl-alpha-D-glucosamine is bound by residues Y365 and N376. Acetyl-CoA-binding positions include 385-386 (NY), A422, and R439.

The protein in the N-terminal section; belongs to the N-acetylglucosamine-1-phosphate uridyltransferase family. This sequence in the C-terminal section; belongs to the transferase hexapeptide repeat family. Homotrimer. Mg(2+) is required as a cofactor.

Its subcellular location is the cytoplasm. The catalysed reaction is alpha-D-glucosamine 1-phosphate + acetyl-CoA = N-acetyl-alpha-D-glucosamine 1-phosphate + CoA + H(+). It carries out the reaction N-acetyl-alpha-D-glucosamine 1-phosphate + UTP + H(+) = UDP-N-acetyl-alpha-D-glucosamine + diphosphate. It participates in nucleotide-sugar biosynthesis; UDP-N-acetyl-alpha-D-glucosamine biosynthesis; N-acetyl-alpha-D-glucosamine 1-phosphate from alpha-D-glucosamine 6-phosphate (route II): step 2/2. It functions in the pathway nucleotide-sugar biosynthesis; UDP-N-acetyl-alpha-D-glucosamine biosynthesis; UDP-N-acetyl-alpha-D-glucosamine from N-acetyl-alpha-D-glucosamine 1-phosphate: step 1/1. Its pathway is bacterial outer membrane biogenesis; LPS lipid A biosynthesis. In terms of biological role, catalyzes the last two sequential reactions in the de novo biosynthetic pathway for UDP-N-acetylglucosamine (UDP-GlcNAc). The C-terminal domain catalyzes the transfer of acetyl group from acetyl coenzyme A to glucosamine-1-phosphate (GlcN-1-P) to produce N-acetylglucosamine-1-phosphate (GlcNAc-1-P), which is converted into UDP-GlcNAc by the transfer of uridine 5-monophosphate (from uridine 5-triphosphate), a reaction catalyzed by the N-terminal domain. The protein is Bifunctional protein GlmU of Clostridium botulinum (strain Kyoto / Type A2).